The following is a 276-amino-acid chain: Glutamate 5-kinase (276 aa).

An ATP-binding site is contributed by Lys14. Residues Ser54, Asp141, and Asn157 each contribute to the substrate site. ATP contacts are provided by residues 177 to 178 (SD) and 219 to 225 (TGGMLTK).

It belongs to the glutamate 5-kinase family.

The protein localises to the cytoplasm. The catalysed reaction is L-glutamate + ATP = L-glutamyl 5-phosphate + ADP. Its pathway is amino-acid biosynthesis; L-proline biosynthesis; L-glutamate 5-semialdehyde from L-glutamate: step 1/2. Functionally, catalyzes the transfer of a phosphate group to glutamate to form L-glutamate 5-phosphate. This chain is Glutamate 5-kinase, found in Listeria monocytogenes serovar 1/2a (strain ATCC BAA-679 / EGD-e).